The primary structure comprises 285 residues: PHO85 cyclin-7 (285 aa).

A compositionally biased stretch (low complexity) spans 1–14 (MELSSPSKKTTTSP). The interval 1 to 42 (MELSSPSKKTTTSPINIPGGNRDNLIIGPHSHSFKTDPFSSN) is disordered. Ser69 bears the Phosphoserine mark.

This sequence belongs to the cyclin family. PHO80 subfamily. As to quaternary structure, forms a cyclin-CDK complex with PHO85. Interacts with the substrate proteins MMR1 and YJL084C. Interacts with the CDK inhibitor (CKI) PHO81.

Its subcellular location is the cytoplasm. With respect to regulation, the PCL7-PHO85 cyclin-CDK is inhibited by PHO81 in low-phosphate conditions. Functionally, cyclin partner of the cyclin-dependent kinase (CDK) PHO85. Together with cyclin PCL6, controls glycogen phosphorylase and glycogen synthase activities in response to nutrient availablility. The PCL7-PHO85 cyclin-CDK holoenzyme has GLC8 kinase activity and phosphorylates and inactivates the phosphatase PP1-2 inhibitor GLC8, causing activation of PP1-2, which then dephosphorylates and activates glycogen phosphorylase. PCL7-PHO85 also phosphorylates MMR1 and YJL084C. In Saccharomyces cerevisiae (strain ATCC 204508 / S288c) (Baker's yeast), this protein is PHO85 cyclin-7 (PCL7).